Reading from the N-terminus, the 254-residue chain is Triosephosphate isomerase (254 aa).

12–14 (NWK) contacts substrate. His-99 acts as the Electrophile in catalysis. Glu-169 serves as the catalytic Proton acceptor. Residues Gly-175, Ser-214, and 235–236 (GG) each bind substrate.

The protein belongs to the triosephosphate isomerase family. As to quaternary structure, homodimer.

The protein resides in the cytoplasm. The catalysed reaction is D-glyceraldehyde 3-phosphate = dihydroxyacetone phosphate. The protein operates within carbohydrate biosynthesis; gluconeogenesis. It participates in carbohydrate degradation; glycolysis; D-glyceraldehyde 3-phosphate from glycerone phosphate: step 1/1. In terms of biological role, involved in the gluconeogenesis. Catalyzes stereospecifically the conversion of dihydroxyacetone phosphate (DHAP) to D-glyceraldehyde-3-phosphate (G3P). The chain is Triosephosphate isomerase from Bartonella henselae (strain ATCC 49882 / DSM 28221 / CCUG 30454 / Houston 1) (Rochalimaea henselae).